Reading from the N-terminus, the 423-residue chain is Amino acid transporter AVT1J (423 aa).

11 helical membrane passes run 39 to 59 (CFHGINALSGVGILSVPYALA), 63 to 83 (WLSLIILFTVAITTFYCAILI), 110 to 130 (VIVSIFMNLELYLVATSFLIL), 151 to 171 (FQGKQMFIIMVALIILPSVWL), 186 to 206 (FASGVILASIFSVGAFEGVGF), 219 to 239 (VATSVSLYAFCYCAHPVFPTL), 252 to 272 (VMIICFTICTFIYASVAVLGY), 297 to 317 (AIWTTLVNPIAKFALMVTPII), 333 to 355 (ASGFLLSTILVTSNVIVALLLPF), 359 to 381 (LMSLVGAFLSASASVILPCLCYL), and 390 to 410 (LGFETLVLIGITLTGIVVVIT).

It belongs to the amino acid/polyamine transporter 2 family. Amino acid/auxin permease (AAAP) (TC 2.A.18.5) subfamily.

It is found in the membrane. The protein is Amino acid transporter AVT1J of Arabidopsis thaliana (Mouse-ear cress).